The sequence spans 471 residues: Phosphatidate cytidylyltransferase 3 (471 aa).

The tract at residues 1-72 is disordered; the sequence is MAMEKDLSPN…HRRRSSENLA (72 aa). The segment covering 21–35 has biased composition (polar residues); the sequence is SYPTTPTSRMNTNNQ. Transmembrane regions (helical) follow at residues 97–116, 120–139, 149–169, 196–216, 228–250, 255–277, 293–313, and 368–388; these read WIRT…IIYM, YIWA…LFFL, LPGF…FVYG, YQMV…ILTL, YAWT…ANIF, WFLL…GFYF, GFIG…NVLG, and FSLG…ASGF.

It belongs to the CDS family. The cofactor is Mg(2+).

It is found in the membrane. The catalysed reaction is a 1,2-diacyl-sn-glycero-3-phosphate + CTP + H(+) = a CDP-1,2-diacyl-sn-glycerol + diphosphate. Its pathway is phospholipid metabolism; CDP-diacylglycerol biosynthesis; CDP-diacylglycerol from sn-glycerol 3-phosphate: step 3/3. Its function is as follows. May be involved in the synthesis of minor phospholipids and in modulation of IP3-mediated signal transduction. The protein is Phosphatidate cytidylyltransferase 3 of Arabidopsis thaliana (Mouse-ear cress).